Here is a 55-residue protein sequence, read N- to C-terminus: ATP synthase F(0) complex subunit 8 (55 aa).

The helical transmembrane segment at 9–29 (WFAIMVFSWFVFLIFLPPKIM) threads the bilayer.

Belongs to the ATPase protein 8 family. Component of the ATP synthase complex composed at least of ATP5F1A/subunit alpha, ATP5F1B/subunit beta, ATP5MC1/subunit c (homooctomer), MT-ATP6/subunit a, MT-ATP8/subunit 8, ATP5ME/subunit e, ATP5MF/subunit f, ATP5MG/subunit g, ATP5MK/subunit k, ATP5MJ/subunit j, ATP5F1C/subunit gamma, ATP5F1D/subunit delta, ATP5F1E/subunit epsilon, ATP5PF/subunit F6, ATP5PB/subunit b, ATP5PD/subunit d, ATP5PO/subunit OSCP. ATP synthase complex consists of a soluble F(1) head domain (subunits alpha(3) and beta(3)) - the catalytic core - and a membrane F(0) domain - the membrane proton channel (subunits c, a, 8, e, f, g, k and j). These two domains are linked by a central stalk (subunits gamma, delta, and epsilon) rotating inside the F1 region and a stationary peripheral stalk (subunits F6, b, d, and OSCP).

It is found in the mitochondrion membrane. In terms of biological role, subunit 8, of the mitochondrial membrane ATP synthase complex (F(1)F(0) ATP synthase or Complex V) that produces ATP from ADP in the presence of a proton gradient across the membrane which is generated by electron transport complexes of the respiratory chain. ATP synthase complex consist of a soluble F(1) head domain - the catalytic core - and a membrane F(1) domain - the membrane proton channel. These two domains are linked by a central stalk rotating inside the F(1) region and a stationary peripheral stalk. During catalysis, ATP synthesis in the catalytic domain of F(1) is coupled via a rotary mechanism of the central stalk subunits to proton translocation. In vivo, can only synthesize ATP although its ATP hydrolase activity can be activated artificially in vitro. Part of the complex F(0) domain. The polypeptide is ATP synthase F(0) complex subunit 8 (Tetraodon nigroviridis (Spotted green pufferfish)).